The following is a 196-amino-acid chain: uncharacterized protein (196 aa).

This is an uncharacterized protein from Aquifex aeolicus (strain VF5).